A 33-amino-acid chain; its full sequence is AKEAAAPTTLKGDQVLKDIFYEVKNKLETAIGV.

The protein localises to the mitochondrion. Its subcellular location is the mitochondrion inner membrane. Mitochondrial membrane ATP synthase (F(1)F(0) ATP synthase or Complex V) produces ATP from ADP in the presence of a proton gradient across the membrane which is generated by electron transport complexes of the respiratory chain. F-type ATPases consist of two structural domains, F(1) - containing the extramembraneous catalytic core and F(0) - containing the membrane proton channel, linked together by a central stalk and a peripheral stalk. During catalysis, ATP synthesis in the catalytic domain of F(1) is coupled via a rotary mechanism of the central stalk subunits to proton translocation. Part of the complex F(0) domain. In Solanum tuberosum (Potato), this protein is ATP synthase 27 kDa subunit, mitochondrial.